Consider the following 102-residue polypeptide: Small ribosomal subunit protein uS10 (102 aa).

Belongs to the universal ribosomal protein uS10 family. As to quaternary structure, part of the 30S ribosomal subunit.

Functionally, involved in the binding of tRNA to the ribosomes. The chain is Small ribosomal subunit protein uS10 from Bacillus anthracis (strain A0248).